The chain runs to 428 residues: Histidine--tRNA ligase (428 aa).

This sequence belongs to the class-II aminoacyl-tRNA synthetase family. Homodimer.

The protein localises to the cytoplasm. The catalysed reaction is tRNA(His) + L-histidine + ATP = L-histidyl-tRNA(His) + AMP + diphosphate + H(+). This is Histidine--tRNA ligase from Mesomycoplasma hyopneumoniae (strain 232) (Mycoplasma hyopneumoniae).